The sequence spans 437 residues: uncharacterized protein (437 aa).

This is an uncharacterized protein from Rhodococcus erythropolis (Arthrobacter picolinophilus).